The following is an 81-amino-acid chain: Cortexin-2 (81 aa).

The chain crosses the membrane as a helical span at residues 29–49 (TAFAFVGMLLVFLGLLIVRCF).

Belongs to the cortexin family.

Its subcellular location is the membrane. In Danio rerio (Zebrafish), this protein is Cortexin-2 (ctxn2).